The primary structure comprises 527 residues: Ankyrin repeat domain-containing protein 42 (527 aa).

The disordered stretch occupies residues 1-27 (MPGVANPGPSKSRRETADSSSRKKVHF). Basic and acidic residues predominate over residues 12 to 21 (SRRETADSSS). 10 ANK repeats span residues 25-54 (VHFS…NLNE), 59-88 (HQFT…DATQ), 92-121 (RGWT…NLAT), 125-154 (RGCT…DPSV), 158-187 (REWK…GIED), 191-220 (NGNL…SATQ), 228-257 (NGEN…EGSH), 263-293 (DLAF…NLNE), 297-326 (NGST…ESNI), and 330-360 (AGET…EIDD). The stretch at 395–484 (NARMRAHKKI…ETLQKIQVTS (90 aa)) forms a coiled coil.

The polypeptide is Ankyrin repeat domain-containing protein 42 (Ankrd42) (Mus musculus (Mouse)).